The following is a 689-amino-acid chain: tRNA 5-methylaminomethyl-2-thiouridine biosynthesis bifunctional protein MnmC (689 aa).

The tRNA (mnm(5)s(2)U34)-methyltransferase stretch occupies residues 1–245; sequence MNQRPIQTAT…KREMLTGTLP (245 aa). Residues 270–689 are FAD-dependent cmnm(5)s(2)U34 oxidoreductase; sequence IGGGIVSALT…RSPATQESSR (420 aa).

It in the N-terminal section; belongs to the methyltransferase superfamily. tRNA (mnm(5)s(2)U34)-methyltransferase family. The protein in the C-terminal section; belongs to the DAO family. FAD is required as a cofactor.

It localises to the cytoplasm. The catalysed reaction is 5-aminomethyl-2-thiouridine(34) in tRNA + S-adenosyl-L-methionine = 5-methylaminomethyl-2-thiouridine(34) in tRNA + S-adenosyl-L-homocysteine + H(+). Catalyzes the last two steps in the biosynthesis of 5-methylaminomethyl-2-thiouridine (mnm(5)s(2)U) at the wobble position (U34) in tRNA. Catalyzes the FAD-dependent demodification of cmnm(5)s(2)U34 to nm(5)s(2)U34, followed by the transfer of a methyl group from S-adenosyl-L-methionine to nm(5)s(2)U34, to form mnm(5)s(2)U34. This chain is tRNA 5-methylaminomethyl-2-thiouridine biosynthesis bifunctional protein MnmC, found in Yersinia pestis.